The following is a 181-amino-acid chain: HGPRTase-like protein 2 (181 aa).

This sequence belongs to the purine/pyrimidine phosphoribosyltransferase family. Archaeal HPRT subfamily.

Functionally, may catalyze a purine salvage reaction, the substrate is unknown. This chain is HGPRTase-like protein 2, found in Haloquadratum walsbyi (strain DSM 16854 / JCM 12705 / C23).